The sequence spans 146 residues: D-aminoacyl-tRNA deacylase (146 aa).

Residues 137–138 (GP) carry the Gly-cisPro motif, important for rejection of L-amino acids motif.

Belongs to the DTD family. As to quaternary structure, homodimer.

It localises to the cytoplasm. It carries out the reaction glycyl-tRNA(Ala) + H2O = tRNA(Ala) + glycine + H(+). It catalyses the reaction a D-aminoacyl-tRNA + H2O = a tRNA + a D-alpha-amino acid + H(+). Functionally, an aminoacyl-tRNA editing enzyme that deacylates mischarged D-aminoacyl-tRNAs. Also deacylates mischarged glycyl-tRNA(Ala), protecting cells against glycine mischarging by AlaRS. Acts via tRNA-based rather than protein-based catalysis; rejects L-amino acids rather than detecting D-amino acids in the active site. By recycling D-aminoacyl-tRNA to D-amino acids and free tRNA molecules, this enzyme counteracts the toxicity associated with the formation of D-aminoacyl-tRNA entities in vivo and helps enforce protein L-homochirality. In Desulfatibacillum aliphaticivorans, this protein is D-aminoacyl-tRNA deacylase.